The following is a 227-amino-acid chain: Adapter protein MecA 1 (227 aa).

Belongs to the MecA family. As to quaternary structure, homodimer.

In terms of biological role, enables the recognition and targeting of unfolded and aggregated proteins to the ClpC protease or to other proteins involved in proteolysis. Acts negatively in the development of competence by binding ComK and recruiting it to the ClpCP protease. When overexpressed, inhibits sporulation. Also involved in Spx degradation by ClpC. The sequence is that of Adapter protein MecA 1 (mecA1) from Bacillus cereus (strain ATCC 14579 / DSM 31 / CCUG 7414 / JCM 2152 / NBRC 15305 / NCIMB 9373 / NCTC 2599 / NRRL B-3711).